The sequence spans 559 residues: Formate--tetrahydrofolate ligase (559 aa).

Residue 68 to 75 (TPAGEGKS) participates in ATP binding.

It belongs to the formate--tetrahydrofolate ligase family.

It catalyses the reaction (6S)-5,6,7,8-tetrahydrofolate + formate + ATP = (6R)-10-formyltetrahydrofolate + ADP + phosphate. It functions in the pathway one-carbon metabolism; tetrahydrofolate interconversion. This chain is Formate--tetrahydrofolate ligase, found in Clostridium tetani (strain Massachusetts / E88).